The chain runs to 241 residues: 2-C-methyl-D-erythritol 4-phosphate cytidylyltransferase (241 aa).

It belongs to the IspD/TarI cytidylyltransferase family. IspD subfamily.

It catalyses the reaction 2-C-methyl-D-erythritol 4-phosphate + CTP + H(+) = 4-CDP-2-C-methyl-D-erythritol + diphosphate. It participates in isoprenoid biosynthesis; isopentenyl diphosphate biosynthesis via DXP pathway; isopentenyl diphosphate from 1-deoxy-D-xylulose 5-phosphate: step 2/6. Catalyzes the formation of 4-diphosphocytidyl-2-C-methyl-D-erythritol from CTP and 2-C-methyl-D-erythritol 4-phosphate (MEP). The polypeptide is 2-C-methyl-D-erythritol 4-phosphate cytidylyltransferase (Pseudoalteromonas translucida (strain TAC 125)).